The chain runs to 136 residues: Large ribosomal subunit protein bL21 (136 aa).

Positions 1 to 21 (MSETPSKAKASKPAESKAQAS) are enriched in low complexity. A disordered region spans residues 1 to 25 (MSETPSKAKASKPAESKAQASDSSG).

Belongs to the bacterial ribosomal protein bL21 family. Part of the 50S ribosomal subunit. Contacts protein L20.

In terms of biological role, this protein binds to 23S rRNA in the presence of protein L20. The sequence is that of Large ribosomal subunit protein bL21 from Synechococcus sp. (strain RCC307).